The primary structure comprises 88 residues: DNA-directed RNA polymerase subunit omega (88 aa).

It belongs to the RNA polymerase subunit omega family. As to quaternary structure, the RNAP catalytic core consists of 2 alpha, 1 beta, 1 beta' and 1 omega subunit. When a sigma factor is associated with the core the holoenzyme is formed, which can initiate transcription.

The enzyme catalyses RNA(n) + a ribonucleoside 5'-triphosphate = RNA(n+1) + diphosphate. Its function is as follows. Promotes RNA polymerase assembly. Latches the N- and C-terminal regions of the beta' subunit thereby facilitating its interaction with the beta and alpha subunits. The polypeptide is DNA-directed RNA polymerase subunit omega (Salinispora arenicola (strain CNS-205)).